The sequence spans 31 residues: Cyclotide vibi-H (31 aa).

A cross-link (cyclopeptide (Gly-Asn)) is located at residues 1–31 (GLLPCAESCVYIPCLTTVIGCSCKSKVCYKN). Disulfide bonds link cysteine 5–cysteine 21, cysteine 9–cysteine 23, and cysteine 14–cysteine 28.

This is a cyclic peptide.

Functionally, probably participates in a plant defense mechanism. Has cytotoxic activity, active against a human lymphoma cell line with an IC(50) of 1.6 uM. This is Cyclotide vibi-H from Viola biflora (Yellow wood violet).